Consider the following 686-residue polypeptide: Probable ferric reductase transmembrane component (686 aa).

7 helical membrane passes run 23-43 (LSGWASLALALGLVCVVVPVV), 79-99 (TLWLALLWCMLGGACAVVGSA), 111-131 (VAAAFMPALFLLTLRPSPLPY), 147-167 (VVVLQATVHSALYTWYFATSG), 178-198 (WMGAVALLAFVLIAATSLPAV), 205-225 (TFYYVHYVGTWVSVLAVHVHS), and 256-276 (VTVVPISTSLALLEFPLADLV). The 559-residue stretch at 108 to 666 (LGRVAAAFMP…LAAGPQALVE (559 aa)) folds into the Ferric oxidoreductase domain. 308-314 (HPFTVAS) is an FAD binding site. Residues 392–412 (LMVVGGSAISFGLPFLRILNF) form a helical membrane-spanning segment. An NAD(+)-binding site is contributed by 431–439 (ILSQFRSNF). N-linked (GlcNAc...) asparagine glycosylation is found at Asn506 and Asn644.

It depends on FAD as a cofactor.

The protein localises to the membrane. The catalysed reaction is 2 a Fe(II)-siderophore + NAD(+) + H(+) = 2 a Fe(III)-siderophore + NADH. Functionally, is required for the uptake of Fe(3+) ions. May participate in the transport of electrons from cytoplasm to an extracellular substrate (Fe(3+) ion) via FAD and heme intermediates. Involved in iron homeostasis. The polypeptide is Probable ferric reductase transmembrane component (FRE8) (Eremothecium gossypii (strain ATCC 10895 / CBS 109.51 / FGSC 9923 / NRRL Y-1056) (Yeast)).